The chain runs to 161 residues: MPSFDIMSEVDLPSLKNAVDVANRKISGRYDFKGSDARVEQGEKVLTLFGDSDFQIDQMRQILLPEMTSKKIDVRCLEYGDLQKIGGNKLKQELKVRVGVEQDLAKKIVKLLKDSKLKVQAAIQGEAIRVSGAKRDILQEAIALVKKEITDFPLQFGNFRD.

The protein belongs to the YajQ family.

Functionally, nucleotide-binding protein. The protein is Nucleotide-binding protein AZOSEA28950 of Aromatoleum aromaticum (strain DSM 19018 / LMG 30748 / EbN1) (Azoarcus sp. (strain EbN1)).